Reading from the N-terminus, the 507-residue chain is AMP phosphorylase (507 aa).

AMP-binding positions include Gly168, 194-199 (SRAITG), and Thr203. The active-site Proton donor is the Asp256. AMP-binding residues include Ser264 and Lys288.

The protein belongs to the thymidine/pyrimidine-nucleoside phosphorylase family. Type 2 subfamily.

It catalyses the reaction AMP + phosphate = alpha-D-ribose 1,5-bisphosphate + adenine. It carries out the reaction CMP + phosphate = cytosine + alpha-D-ribose 1,5-bisphosphate. The enzyme catalyses UMP + phosphate = alpha-D-ribose 1,5-bisphosphate + uracil. Functionally, catalyzes the conversion of AMP and phosphate to adenine and ribose 1,5-bisphosphate (R15P). Exhibits phosphorylase activity toward CMP and UMP in addition to AMP. Functions in an archaeal AMP degradation pathway, together with R15P isomerase and RubisCO. This Methanosarcina mazei (strain ATCC BAA-159 / DSM 3647 / Goe1 / Go1 / JCM 11833 / OCM 88) (Methanosarcina frisia) protein is AMP phosphorylase.